The primary structure comprises 426 residues: Protein TolB homolog (426 aa).

A signal peptide spans 1–19 (MFLRSFLCLLCLLPSILYC).

It belongs to the TolB family.

The protein resides in the periplasm. This Chlamydia muridarum (strain MoPn / Nigg) protein is Protein TolB homolog.